The sequence spans 363 residues: MVCFASLRRALPLLLRATTTTTPRFLLPRALSGGVGGGAAVDARALLRGHSGWRGLRVAARMMLDSSDSAAAAGQMQPQQRAAGAVACSAQDGGAAGYASGGWAREDGKLKCGYSSFRGKRATMEDFYDVKLTEIDGQAVSLFGVFDGHGGPRAAEYLKENLFENLLKHPEFLTDTKLAISETYQKTDTDFLESESNAFRDDGSTASTAVLVGGHLYVANVGDSRAVVSKAGKAMALSEDHKPNRSDERKRIENAGGVVIWAGTWRVGGVLAMSRAFGNRLLKPFVVAEPEIQEELVNEDLECLVLASDGLWDVVENEEAVSLAKTEDLPESVARKLTEIAYSRGSADNITCIVVQFHHDKTE.

A mitochondrion-targeting transit peptide spans 1 to 59; that stretch reads MVCFASLRRALPLLLRATTTTTPRFLLPRALSGGVGGGAAVDARALLRGHSGWRGLRVA. The PPM-type phosphatase domain occupies 111–357; it reads KCGYSSFRGK…DNITCIVVQF (247 aa). Mn(2+) contacts are provided by aspartate 147, glycine 148, aspartate 309, and aspartate 348.

It belongs to the PP2C family. The cofactor is Mg(2+). It depends on Mn(2+) as a cofactor. Highly expressed in mature pollen grains.

The protein resides in the mitochondrion. The catalysed reaction is O-phospho-L-seryl-[protein] + H2O = L-seryl-[protein] + phosphate. The enzyme catalyses O-phospho-L-threonyl-[protein] + H2O = L-threonyl-[protein] + phosphate. In terms of biological role, probable protein phosphatase that may play a role as a mitochondrial signal transduction mediator in pollen germination. May function in retrograde signaling from the mitochondria to the nucleus. May be a downstream factor of cytoplasmic male sterility (CMS). CMS is caused by genetic incompatibility between nuclei and mitochondria within male reproductive organs. This Oryza sativa subsp. japonica (Rice) protein is Probable protein phosphatase 2C member 13, mitochondrial.